Reading from the N-terminus, the 83-residue chain is MKATYNIQDYFLNQLRKDSVPTTVFLISGYQLRGLIKSFDNFTVILESEGKQQLIYKHAISTFAPARNVTLYEQETETEEVTR.

Positions 9–69 constitute a Sm domain; sequence DYFLNQLRKD…ISTFAPARNV (61 aa).

This sequence belongs to the Hfq family. Homohexamer.

RNA chaperone that binds small regulatory RNA (sRNAs) and mRNAs to facilitate mRNA translational regulation in response to envelope stress, environmental stress and changes in metabolite concentrations. Also binds with high specificity to tRNAs. This is RNA-binding protein Hfq from Exiguobacterium sibiricum (strain DSM 17290 / CCUG 55495 / CIP 109462 / JCM 13490 / 255-15).